The sequence spans 336 residues: Gastrula zinc finger protein XlCGF57.1 (336 aa).

11 C2H2-type zinc fingers span residues 6-28, 34-56, 62-84, 90-112, 118-140, 146-168, 174-196, 202-224, 230-252, 258-280, and 286-308; these read YTCT…MKIH, FICT…MKTH, FTCT…LTIH, FSCT…MKTH, FTCT…MKTH, FTCT…LKIH, FTCT…MKIH, FSCT…LTMH, FTCT…TKIH, and FSCT…LKIH.

The protein belongs to the krueppel C2H2-type zinc-finger protein family.

The protein resides in the nucleus. Its function is as follows. May be involved in transcriptional regulation. In Xenopus laevis (African clawed frog), this protein is Gastrula zinc finger protein XlCGF57.1.